The chain runs to 107 residues: U1-lycotoxin-Ls1o (107 aa).

The first 20 residues, 1–20 (MMKVLVVVALLVTLISYSSS), serve as a signal peptide directing secretion. A propeptide spanning residues 21–41 (EGIDDLEADELLSLMANEQTR) is cleaved from the precursor. Intrachain disulfides connect Cys-44-Cys-59, Cys-51-Cys-68, Cys-58-Cys-86, and Cys-70-Cys-84.

It belongs to the neurotoxin 19 (CSTX) family. 04 (U1-Lctx) subfamily. As to expression, expressed by the venom gland.

Its subcellular location is the secreted. The sequence is that of U1-lycotoxin-Ls1o from Lycosa singoriensis (Wolf spider).